A 227-amino-acid chain; its full sequence is MHLSLTPQWSSWTVLLLLVSNLLLWENTASAMRAKRLNVHDYTTFGNTWNQAIQLSQSMNHRISELSTHFKVFYAQGRGFEKRTTRCHTSSLSSPENKEQAQKIQLEVLLGLAHSLLQAWVNPLYHLWAEMCERLGSTPPILSKALEVKTLNRNLLETIEKIAFKGNFEINENGNYTAWSELELLQSPNRDTRYFAFHNLFHCLKKDSSHVEMYLKLLKCRLIQSNC.

Residues 1–31 form the signal peptide; the sequence is MHLSLTPQWSSWTVLLLLVSNLLLWENTASA. 2 cysteine pairs are disulfide-bonded: C87–C203 and C220–C227. N-linked (GlcNAc...) asparagine glycosylation is present at N175.

Belongs to the somatotropin/prolactin family. In terms of tissue distribution, expressed specifically in placenta. Expressed in both trophoblast giant cells and spongiotrophoblast cells.

It localises to the secreted. The protein is Prolactin-4A1 (Prl4a1) of Mus musculus (Mouse).